The following is a 412-amino-acid chain: Phosphoglycerate kinase (412 aa).

Substrate is bound by residues 26-28 (DFN), Arg42, 65-68 (HLGR), Arg133, and Arg166. Residues Lys217, Gly308, Glu339, and 368-371 (GGDS) contribute to the ATP site.

This sequence belongs to the phosphoglycerate kinase family. Monomer.

The protein resides in the cytoplasm. It catalyses the reaction (2R)-3-phosphoglycerate + ATP = (2R)-3-phospho-glyceroyl phosphate + ADP. It participates in carbohydrate degradation; glycolysis; pyruvate from D-glyceraldehyde 3-phosphate: step 2/5. This is Phosphoglycerate kinase from Synechococcus sp. (strain JA-2-3B'a(2-13)) (Cyanobacteria bacterium Yellowstone B-Prime).